The chain runs to 1093 residues: Carbamoyl phosphate synthase large chain (1093 aa).

A carboxyphosphate synthetic domain region spans residues Met1–Glu412. ATP-binding residues include Arg139, Arg179, Gly185, Gly186, Glu218, Val220, Glu225, Gly251, Val252, His253, Gln295, and Glu309. The ATP-grasp 1 domain occupies Lys143–Val338. Mg(2+) is bound by residues Gln295, Glu309, and Asn311. Gln295, Glu309, and Asn311 together coordinate Mn(2+). An oligomerization domain region spans residues Thr413–Ala560. Residues Pro561 to Gly952 form a carbamoyl phosphate synthetic domain region. One can recognise an ATP-grasp 2 domain in the interval Gly689–Thr880. ATP is bound by residues Arg725, His764, Leu766, Glu771, Gly796, Ile797, His798, Ser799, Gln839, and Glu851. Gln839, Glu851, and Asn853 together coordinate Mg(2+). 3 residues coordinate Mn(2+): Gln839, Glu851, and Asn853. The MGS-like domain occupies Leu953–Lys1093. The interval Leu953 to Lys1093 is allosteric domain.

It belongs to the CarB family. In terms of assembly, composed of two chains; the small (or glutamine) chain promotes the hydrolysis of glutamine to ammonia, which is used by the large (or ammonia) chain to synthesize carbamoyl phosphate. Tetramer of heterodimers (alpha,beta)4. Requires Mg(2+) as cofactor. It depends on Mn(2+) as a cofactor.

It catalyses the reaction hydrogencarbonate + L-glutamine + 2 ATP + H2O = carbamoyl phosphate + L-glutamate + 2 ADP + phosphate + 2 H(+). The catalysed reaction is hydrogencarbonate + NH4(+) + 2 ATP = carbamoyl phosphate + 2 ADP + phosphate + 2 H(+). It participates in amino-acid biosynthesis; L-arginine biosynthesis; carbamoyl phosphate from bicarbonate: step 1/1. It functions in the pathway pyrimidine metabolism; UMP biosynthesis via de novo pathway; (S)-dihydroorotate from bicarbonate: step 1/3. Large subunit of the glutamine-dependent carbamoyl phosphate synthetase (CPSase). CPSase catalyzes the formation of carbamoyl phosphate from the ammonia moiety of glutamine, carbonate, and phosphate donated by ATP, constituting the first step of 2 biosynthetic pathways, one leading to arginine and/or urea and the other to pyrimidine nucleotides. The large subunit (synthetase) binds the substrates ammonia (free or transferred from glutamine from the small subunit), hydrogencarbonate and ATP and carries out an ATP-coupled ligase reaction, activating hydrogencarbonate by forming carboxy phosphate which reacts with ammonia to form carbamoyl phosphate. The chain is Carbamoyl phosphate synthase large chain from Acidobacterium capsulatum (strain ATCC 51196 / DSM 11244 / BCRC 80197 / JCM 7670 / NBRC 15755 / NCIMB 13165 / 161).